Reading from the N-terminus, the 540-residue chain is uncharacterized protein (540 aa).

This is an uncharacterized protein from Escherichia coli (strain K12).